Consider the following 298-residue polypeptide: MSEFKVKTGLAQMLKGGVIMDVVTPEQAIIAERAGACAVMALERIPADMRKSGQVCRMSDPRMIKEIMEAVSIPVMAKVRIGHFVEAQILEELQVDYIDESEVLTPADWTHHIEKHNFKVPFVCGAKDLGEALRRINEGAAMIRTKGEAGTGDVSEAVKHITKIKAEIQQYKENLKTESDFAAKATELRVPVDLLKTTLSEGKLPVVNFAAGGVATPADAALLMQLGCEGVFVGSGIFKSSDPEKLACAIVEATTHYDNPAKLLQISSDLGDLMGGISIQSINEAGGKNGARLSEIGW.

Aspartate 21 is a D-ribose 5-phosphate binding site. Lysine 78 (schiff-base intermediate with D-ribose 5-phosphate) is an active-site residue. Residues glycine 150, glycine 213, and 234–235 each bind D-ribose 5-phosphate; that span reads GS.

The protein belongs to the PdxS/SNZ family. As to quaternary structure, homohexamer. Interacts with THI11.

The enzyme catalyses aldehydo-D-ribose 5-phosphate + D-glyceraldehyde 3-phosphate + L-glutamine = pyridoxal 5'-phosphate + L-glutamate + phosphate + 3 H2O + H(+). Its pathway is cofactor biosynthesis; pyridoxal 5'-phosphate biosynthesis. In terms of biological role, catalyzes the formation of pyridoxal 5'-phosphate from ribose 5-phosphate (RBP), glyceraldehyde 3-phosphate (G3P) and ammonia. The ammonia is provided by a SNO isoform. Can also use ribulose 5-phosphate and dihydroxyacetone phosphate as substrates, resulting from enzyme-catalyzed isomerization of RBP and G3P, respectively. This is Probable pyridoxal 5'-phosphate synthase subunit SNZ2 (SNZ2) from Saccharomyces cerevisiae (strain ATCC 204508 / S288c) (Baker's yeast).